The primary structure comprises 394 residues: Elongation factor Tu (394 aa).

Residues 10-205 (KPHMNVGTIG…SMDNYFDLPE (196 aa)) form the tr-type G domain. The segment at 19-26 (GHVDHGKT) is G1. 19–26 (GHVDHGKT) contributes to the GTP binding site. T26 contacts Mg(2+). The G2 stretch occupies residues 61-65 (GITIN). The interval 82–85 (DCPG) is G3. GTP-binding positions include 82–86 (DCPGH) and 137–140 (NKLD). A G4 region spans residues 137-140 (NKLD). Residues 173-175 (SAF) are G5.

Belongs to the TRAFAC class translation factor GTPase superfamily. Classic translation factor GTPase family. EF-Tu/EF-1A subfamily. As to quaternary structure, monomer.

It localises to the cytoplasm. The catalysed reaction is GTP + H2O = GDP + phosphate + H(+). Its function is as follows. GTP hydrolase that promotes the GTP-dependent binding of aminoacyl-tRNA to the A-site of ribosomes during protein biosynthesis. This Borreliella afzelii (strain PKo) (Borrelia afzelii) protein is Elongation factor Tu.